Consider the following 163-residue polypeptide: Retinoic acid receptor responder protein 2 (163 aa).

The signal sequence occupies residues 1 to 20; the sequence is MRRLLIPLALWLGAVGVGVA. 3 cysteine pairs are disulfide-bonded: C77–C87, C98–C117, and C101–C135. Positions 158 to 163 are excised as a propeptide; sequence KALPRS.

Secreted in an inactive precursor form, prochemerin, which is proteolytically processed by a variety of extracellular proteases to generate forms with differing levels of bioactivity. For example, the removal of six amino acids results in chemerin-157, which exhibits the highest activity, while removal of seven amino acids results in chemerin-156 which has slightly less activity. Some proteases are able to cleave at more than one site and chemerin forms may be sequentially processed by different enzymes to modulate activity levels. The coordinated expression and activity of chemerin-modifying enzymes is essential for regulating its bioactivation, inactivation and, consequently, biological function. Cathepsin G cleaves seven C-terminal amino acids from prochemerin (chemerin-156), elastase is able to cleave six (chemerin-157), eight (chemerin-155) or eleven (chemerin-152), plasmin cleaves five amino acids (chemerin-158), and tryptase cleaves five (chemerin-158) or eight (chemerin-155). Multiple cleavages might be required to fully activate chemerin, with an initial tryptase cleavage resulting in chemerin with low activity (chemerin-158), and a second cleavage by carboxypeptidase N or B producing highly active chemerin (chemerin-157).

It localises to the secreted. Its function is as follows. Adipocyte-secreted protein (adipokine) that regulates adipogenesis, metabolism and inflammation through activation of the chemokine-like receptor 1 (CMKLR1). Also acts as a ligand for CMKLR2. Can also bind to C-C chemokine receptor-like 2 (CCRL2), but with a lower affinity than it does to CMKLR1 or CMKLR2. Positively regulates adipocyte differentiation, modulates the expression of adipocyte genes involved in lipid and glucose metabolism and might play a role in angiogenesis, a process essential for the expansion of white adipose tissue. Also acts as a pro-inflammatory adipokine, causing an increase in secretion of pro-inflammatory and prodiabetic adipokines, which further impair adipose tissue metabolic function and have negative systemic effects including impaired insulin sensitivity, altered glucose and lipid metabolism, and a decrease in vascular function in other tissues. Can have both pro- and anti-inflammatory properties depending on the modality of enzymatic cleavage by different classes of proteases. Acts as a chemotactic factor for leukocyte populations expressing CMKLR1, particularly immature plasmacytoid dendritic cells, but also immature myeloid DCs, macrophages and natural killer cells. Exerts an anti-inflammatory role by preventing TNF/TNFA-induced VCAM1 expression and monocytes adhesion in vascular endothelial cells. The effect is mediated via inhibiting activation of NF-kappa-B and CRK/p38 through stimulation of AKT1/NOS3 signaling and nitric oxide production. Exhibits an antimicrobial function in the skin. This is Retinoic acid receptor responder protein 2 (RARRES2) from Pongo abelii (Sumatran orangutan).